The following is a 144-amino-acid chain: Large ribosomal subunit protein uL13 (144 aa).

Belongs to the universal ribosomal protein uL13 family. As to quaternary structure, part of the 50S ribosomal subunit.

Its function is as follows. This protein is one of the early assembly proteins of the 50S ribosomal subunit, although it is not seen to bind rRNA by itself. It is important during the early stages of 50S assembly. The chain is Large ribosomal subunit protein uL13 from Clostridium botulinum (strain ATCC 19397 / Type A).